The primary structure comprises 107 residues: CLAVATA3/ESR (CLE)-related protein 13 (107 aa).

A signal peptide spans 1–25; that stretch reads MATTRVSHVLGFLLWISLLIFVSIG. An N-linked (GlcNAc...) asparagine glycan is attached at asparagine 29. The interval 79 to 107 is disordered; that stretch reads ALPAGGSEIDPRYGVEKRLVPSGPNPLHH. Basic and acidic residues predominate over residues 87–97; the sequence is IDPRYGVEKRL. Hydroxyproline is present on residues proline 99 and proline 102. The O-linked (Ara...) hydroxyproline glycan is linked to proline 102.

Belongs to the CLV3/ESR signal peptide family. The O-glycosylation (arabinosylation) of the hydroxyproline Pro-102 enhances binding affinity of the CLE13p peptide for its receptor. In terms of tissue distribution, mostly expressed in seedlings, roots, flowers, stems and apex, and, to a lower extent, in leaves and siliques.

It localises to the secreted. It is found in the extracellular space. Its function is as follows. Extracellular signal peptide that regulates cell fate. Represses root apical meristem maintenance. Regulates the transition of protophloem cells from proliferation to differentiation, thus impinging on postembryonic growth capacity of the root meristem; this signaling pathway requires CRN and CLV2. The chain is CLAVATA3/ESR (CLE)-related protein 13 from Arabidopsis thaliana (Mouse-ear cress).